Reading from the N-terminus, the 163-residue chain is ATP synthase subunit delta, mitochondrial (163 aa).

The transit peptide at 1–18 directs the protein to the mitochondrion; it reads MLARTIQRFSVVAKRGYA.

Belongs to the ATPase epsilon chain family. As to quaternary structure, subunit of the F-type ATPase which has 2 components, CF(1) - the catalytic core - and CF(0) - the membrane proton channel.

The protein localises to the mitochondrion. It localises to the mitochondrion inner membrane. Mitochondrial membrane ATP synthase (F(1)F(0) ATP synthase or Complex V) produces ATP from ADP in the presence of a proton gradient across the membrane which is generated by electron transport complexes of the respiratory chain. F-type ATPases consist of two structural domains, F(1) - containing the extramembraneous catalytic core, and F(0) - containing the membrane proton channel, linked together by a central stalk and a peripheral stalk. During catalysis, ATP turnover in the catalytic domain of F(1) is coupled via a rotary mechanism of the central stalk subunits to proton translocation. Part of the complex F(1) domain and of the central stalk which is part of the complex rotary element. The sequence is that of ATP synthase subunit delta, mitochondrial from Caenorhabditis elegans.